A 272-amino-acid chain; its full sequence is MSSYAPREIPLDIRLMQGTSRALFWLVALGCLFVAGHWLMQRNWWDIRAVRLQGDLQRISPVTVRAEALPQLRGNFLTINLAQAQRVFESLPWVRTAVVQRLWPMQLAVTLQAQQPVAIWREPGSAAQLVNTQGQAFTANLGEVQGLGLPQLSGPAGTSAQVLQMSQKLQPLMQEFHQTVATLAQGSGGNWSVQTRSGLSIDLGSAPDSAATQTRLKQFMTLMPQLEARYGRSIDSVDLRYPNGFAVHLQGVDLPGMNKTSNKTPQPAGRKD.

At 1 to 20 (MSSYAPREIPLDIRLMQGTS) the chain is on the cytoplasmic side. A helical membrane pass occupies residues 21–40 (RALFWLVALGCLFVAGHWLM). Residues 41-272 (QRNWWDIRAV…KTPQPAGRKD (232 aa)) are Periplasmic-facing. The 70-residue stretch at 45-114 (WDIRAVRLQG…MQLAVTLQAQ (70 aa)) folds into the POTRA domain.

Belongs to the FtsQ/DivIB family. FtsQ subfamily. As to quaternary structure, part of a complex composed of FtsB, FtsL and FtsQ.

Its subcellular location is the cell inner membrane. Functionally, essential cell division protein. May link together the upstream cell division proteins, which are predominantly cytoplasmic, with the downstream cell division proteins, which are predominantly periplasmic. May control correct divisome assembly. The protein is Cell division protein FtsQ of Thiomonas arsenitoxydans (strain DSM 22701 / CIP 110005 / 3As).